The sequence spans 332 residues: MAALVAAAALAAAEPAPAVPQAAGSGGPTSRRDFYWLRSFLAGGIAGCCAKTTVAPLDRVKVLLQAHNRHYKHLGVLSTLRAVPQKEGYLGLYKGNGAMMIRIFPYGAIQFMAFEHYKTFITTKLGVSGHVHRLMAGSMAGMTAVICTYPLDVVRVRLAFQVKGEHTYSGIIHAFKTIYAKEGGFLGFYRGLMPTILGMAPYAGVSFFTFGTLKSVGLSYAPALLGRPSSDNPNVLVLKTHINLLCGGVAGAIAQTISYPFDVTRRRMQLGAVLPEFEKCLTMRETMKYVYGQHGIRRGLYRGLSLNYIRCIPSQAVAFTTYELMKQFFHLN.

Solcar repeat units follow at residues Phe34–Phe120, Ser128–Val216, and Leu238–Phe328. The next 6 helical transmembrane spans lie at Leu37 to Leu57, Gly88 to Ala108, Leu134 to Val154, Gly191 to Gly211, Leu244 to Thr264, and Gly299 to Phe319.

Belongs to the mitochondrial carrier (TC 2.A.29) family.

Its subcellular location is the mitochondrion inner membrane. Functionally, may be involved in the transport of coenzyme A in the mitochondrial matrix. Very little is known about the physiological function of this carrier. The chain is Solute carrier family 25 member 16 from Mus musculus (Mouse).